The sequence spans 422 residues: NADP-dependent malic enzyme (422 aa).

The active-site Proton donor is tyrosine 39. The active-site Proton acceptor is the lysine 94. Lysine 94 is a binding site for substrate. A divalent metal cation contacts are provided by glutamate 136, aspartate 137, and aspartate 162. NADP(+) is bound by residues 195-198 (AGAA), asparagine 286, and asparagine 318. Asparagine 318 contacts substrate.

Belongs to the malic enzymes family. Mg(2+) is required as a cofactor. Requires Mn(2+) as cofactor.

The enzyme catalyses (S)-malate + NADP(+) = pyruvate + CO2 + NADPH. It carries out the reaction oxaloacetate + H(+) = pyruvate + CO2. This Halomonas elongata (strain ATCC 33173 / DSM 2581 / NBRC 15536 / NCIMB 2198 / 1H9) protein is NADP-dependent malic enzyme.